The sequence spans 274 residues: Large ribosomal subunit protein uL2cz/uL2cy (274 aa).

Residues 1–15 are compositionally biased toward polar residues; it reads MAINLYKTSTPSTRN. Disordered stretches follow at residues 1 to 22 and 225 to 274; these read MAIN…DSQV and PVDH…RRSK.

Belongs to the universal ribosomal protein uL2 family. As to quaternary structure, part of the 50S ribosomal subunit.

Its subcellular location is the plastid. The protein localises to the chloroplast. The polypeptide is Large ribosomal subunit protein uL2cz/uL2cy (rpl2-A) (Lobularia maritima (Sweet alyssum)).